The chain runs to 238 residues: uncharacterized protein (238 aa).

Transmembrane regions (helical) follow at residues 19 to 39 (FIYGMLLANPVWAHIFLLLGW), 64 to 84 (WSVIYFAAAVIFAIPALIYNW), 85 to 105 (QVLYFMFAMLPFVAVNIYFTK), 112 to 132 (LWNDLAGILIFALAGMGSYYF), 141 to 161 (ILWVAIYPTLFFIGTTLYVKS), 176 to 196 (VIFHLLCALIFVVSQQFILAL), and 218 to 238 (VGLIEFAITAVFFILLLVATL).

The protein to B.subtilis YwiC.

The protein resides in the cell membrane. This is an uncharacterized protein from Haemophilus influenzae (strain ATCC 51907 / DSM 11121 / KW20 / Rd).